Here is a 315-residue protein sequence, read N- to C-terminus: Protoheme IX farnesyltransferase 1 (315 aa).

8 consecutive transmembrane segments (helical) span residues 30–50, 56–76, 106–126, 132–152, 162–182, 186–206, 249–269, and 289–309; these read PGIIISNSLAALGGFWIAWIQ, GGPGIFAAMAVAMIGTALVMA, IPPPVMILYGTCLGACGFIML, LTAVLGLLAFLLYAVVYTLWF, VGSFPGAAPPLIGYCALTGYI, AILLYAIMFLWQPPHFWAIGI, LYIDVSPFYTASALLLGAIWL, and FFYSIVYFSLLFLILMADSFI.

It belongs to the UbiA prenyltransferase family. Protoheme IX farnesyltransferase subfamily. Interacts with CtaA.

It localises to the cell membrane. It catalyses the reaction heme b + (2E,6E)-farnesyl diphosphate + H2O = Fe(II)-heme o + diphosphate. The protein operates within porphyrin-containing compound metabolism; heme O biosynthesis; heme O from protoheme: step 1/1. Functionally, converts heme B (protoheme IX) to heme O by substitution of the vinyl group on carbon 2 of heme B porphyrin ring with a hydroxyethyl farnesyl side group. The chain is Protoheme IX farnesyltransferase 1 from Bacillus velezensis (strain DSM 23117 / BGSC 10A6 / LMG 26770 / FZB42) (Bacillus amyloliquefaciens subsp. plantarum).